Here is a 569-residue protein sequence, read N- to C-terminus: ABC1 family protein MCP2 (569 aa).

The transit peptide at 1–18 (MMTKAFFNKLPFEVFRRY) directs the protein to the mitochondrion. Topologically, residues 19–34 (VRTGKSIPQRSPRTRK) are mitochondrial matrix. A helical transmembrane segment spans residues 35-51 (SLLVGGTIASAVVLYNF). Residues 52–569 (NDTFHDSVKH…KFIPKTWLSS (518 aa)) lie on the Mitochondrial intermembrane side of the membrane.

This sequence belongs to the protein kinase superfamily. ADCK protein kinase family.

The protein localises to the mitochondrion. Its subcellular location is the mitochondrion inner membrane. Functionally, component of MIOREX complexes, large expressome-like assemblies of ribosomes with factors involved in all the steps of post-transcriptional gene expression. Involved in mitochondrial lipid homeostasis. In Saccharomyces cerevisiae (strain ATCC 204508 / S288c) (Baker's yeast), this protein is ABC1 family protein MCP2.